The chain runs to 302 residues: MYRELISHKIAELKKERKAIILAHNYQLGEIQDAADFVGDSLELARKAAKVDAGVIVFCGVHFMAETAAILSPEKIVLAPEPRAGCPMADMISGAELREFKSRHPGLPVVCYVNSTAEVKAESDICCTSANAVKVVESLKSDTVLFVPDQYLGAFVKERTSKKIISWPGYCPSHARIKPEDIVNLKKHYPAARVIVHPESRPEVTALADEVLSTGQMVSYATRADVKELIVGTEIGMLYRLRKENPDKLFIPVSEQAVCANMKMTTLPKLLASLENMQTVVSVPEEIRVKAVGAVERMLRVV.

Positions 24 and 41 each coordinate iminosuccinate. A [4Fe-4S] cluster-binding site is contributed by C86. Iminosuccinate-binding positions include 112 to 114 (YVN) and S129. C171 provides a ligand contact to [4Fe-4S] cluster. Iminosuccinate-binding positions include 197–199 (HPE) and T214. C259 contributes to the [4Fe-4S] cluster binding site.

This sequence belongs to the quinolinate synthase family. Type 2 subfamily. Requires [4Fe-4S] cluster as cofactor.

It is found in the cytoplasm. It catalyses the reaction iminosuccinate + dihydroxyacetone phosphate = quinolinate + phosphate + 2 H2O + H(+). The protein operates within cofactor biosynthesis; NAD(+) biosynthesis; quinolinate from iminoaspartate: step 1/1. Its function is as follows. Catalyzes the condensation of iminoaspartate with dihydroxyacetone phosphate to form quinolinate. The chain is Quinolinate synthase from Dehalococcoides mccartyi (strain ATCC BAA-2100 / JCM 16839 / KCTC 5957 / BAV1).